A 553-amino-acid polypeptide reads, in one-letter code: HTH-type transcriptional regulator SgrR (553 aa).

The 117-residue stretch at M1–Q117 folds into the HTH marR-type domain. The segment at residues L26–K49 is a DNA-binding region (H-T-H motif). Positions E163–W494 are solute-binding.

Activates the small RNA gene sgrS under glucose-phosphate stress conditions as well as yfdZ. Represses its own transcription under both stress and non-stress conditions. Might act as a sensor of the intracellular accumulation of phosphoglucose by binding these molecules in its C-terminal solute-binding domain. This is HTH-type transcriptional regulator SgrR from Photorhabdus laumondii subsp. laumondii (strain DSM 15139 / CIP 105565 / TT01) (Photorhabdus luminescens subsp. laumondii).